The following is a 3122-amino-acid chain: Laminin subunit alpha-2 (3122 aa).

The first 22 residues, 1 to 22 (MPGAAGVLLLLLLSGGLGGVQA), serve as a signal peptide directing secretion. The 252-residue stretch at 35-286 (QQRGLFPAVL…SVKDISVGGM (252 aa)) folds into the Laminin N-terminal domain. N-linked (GlcNAc...) asparagine glycosylation is found at asparagine 55 and asparagine 89. Cystine bridges form between cysteine 287/cysteine 296, cysteine 289/cysteine 307, cysteine 309/cysteine 318, cysteine 321/cysteine 341, cysteine 344/cysteine 353, and cysteine 346/cysteine 378. Laminin EGF-like domains lie at 287–343 (CICY…ECEA), 344–413 (CNCH…PCQP), 414–468 (CHCD…DCKA), and 469–517 (CNCS…GCDE). N-linked (GlcNAc...) asparagine glycosylation occurs at asparagine 303. N-linked (GlcNAc...) asparagine glycans are attached at residues asparagine 363 and asparagine 380. 10 cysteine pairs are disulfide-bonded: cysteine 381-cysteine 390, cysteine 393-cysteine 411, cysteine 414-cysteine 426, cysteine 416-cysteine 442, cysteine 444-cysteine 453, cysteine 456-cysteine 466, cysteine 469-cysteine 482, cysteine 471-cysteine 486, cysteine 488-cysteine 497, and cysteine 500-cysteine 515. N-linked (GlcNAc...) asparagine glycosylation occurs at asparagine 470. The Laminin EGF-like 5; first part domain occupies 518–527 (CFCSGVSNRC). The 193-residue stretch at 531-723 (YWTYGKIQDM…DGSIAAAVEV (193 aa)) folds into the Laminin IV type A 1 domain. Positions 724-756 (CQCPPGYTGSSCESCWPRHRRVNGTIFGGICEP) constitute a Laminin EGF-like 5; second part domain. N-linked (GlcNAc...) asparagine glycosylation is present at asparagine 746. 32 disulfide bridges follow: cysteine 757–cysteine 766, cysteine 759–cysteine 773, cysteine 776–cysteine 785, cysteine 788–cysteine 804, cysteine 807–cysteine 822, cysteine 809–cysteine 832, cysteine 835–cysteine 844, cysteine 847–cysteine 862, cysteine 865–cysteine 879, cysteine 867–cysteine 886, cysteine 889–cysteine 898, cysteine 901–cysteine 915, cysteine 918–cysteine 930, cysteine 920–cysteine 937, cysteine 939–cysteine 948, cysteine 951–cysteine 964, cysteine 967–cysteine 979, cysteine 969–cysteine 985, cysteine 987–cysteine 996, cysteine 999–cysteine 1011, cysteine 1014–cysteine 1023, cysteine 1016–cysteine 1030, cysteine 1032–cysteine 1041, cysteine 1044–cysteine 1057, cysteine 1060–cysteine 1072, cysteine 1062–cysteine 1079, cysteine 1081–cysteine 1090, cysteine 1093–cysteine 1103, cysteine 1106–cysteine 1118, cysteine 1108–cysteine 1134, cysteine 1136–cysteine 1145, and cysteine 1148–cysteine 1163. Laminin EGF-like domains are found at residues 757–806 (CQCF…DCQP), 807–864 (CACP…SCQP), 865–917 (CQCN…NCQP), 918–966 (CRCN…GCVP), 967–1013 (CNCN…GCTA), 1014–1059 (CECS…GCKA), 1060–1105 (CNCS…RCNL), and 1106–1165 (CDCF…GCSS). An N-linked (GlcNAc...) asparagine glycan is attached at asparagine 1061. The Laminin EGF-like 14; first part domain maps to 1166 to 1175 (CYCFGTTTQC). The 204-residue stretch at 1176-1379 (SEAKGLIRTW…MTPPADLIEK (204 aa)) folds into the Laminin IV type A 2 domain. The region spanning 1380 to 1419 (CDCPLGYSGLSCEACLPGFYRLRSQPGGRTPGPTLGTCVP) is the Laminin EGF-like 14; second part domain. 12 disulfide bridges follow: cysteine 1420/cysteine 1429, cysteine 1422/cysteine 1436, cysteine 1439/cysteine 1448, cysteine 1451/cysteine 1466, cysteine 1469/cysteine 1484, cysteine 1471/cysteine 1494, cysteine 1497/cysteine 1506, cysteine 1509/cysteine 1524, cysteine 1527/cysteine 1539, cysteine 1529/cysteine 1546, cysteine 1548/cysteine 1557, and cysteine 1560/cysteine 1571. 3 Laminin EGF-like domains span residues 1420 to 1468 (CQCN…DCQQ), 1469 to 1526 (CACP…SCQE), and 1527 to 1573 (CECD…ECVF). The domain II and I stretch occupies residues 1574–2144 (CGDECTGLLL…NQARKQANSI (571 aa)). 12 N-linked (GlcNAc...) asparagine glycosylation sites follow: asparagine 1597, asparagine 1614, asparagine 1700, asparagine 1810, asparagine 1901, asparagine 1916, asparagine 1920, asparagine 2017, asparagine 2028, asparagine 2045, asparagine 2126, and asparagine 2240. Residues 1630–2150 (ERLIQLAEGN…ANSIKVSVSS (521 aa)) are a coiled coil. Laminin G-like domains are found at residues 2145 to 2328 (KVSV…CKGC), 2340 to 2521 (TIQF…TKGC), 2526 to 2710 (VYTV…IGRC), 2763 to 2934 (SKQF…VGTC), and 2939 to 3110 (QRGT…KALE). Cysteine 2302 and cysteine 2328 form a disulfide bridge. Residues asparagine 2360, asparagine 2435, and asparagine 2478 are each glycosylated (N-linked (GlcNAc...) asparagine). Cysteine 2495 and cysteine 2521 are disulfide-bonded. Residues asparagine 2551, asparagine 2558, and asparagine 2648 are each glycosylated (N-linked (GlcNAc...) asparagine). Cysteine 2683 and cysteine 2710 are joined by a disulfide. Residues asparagine 2868 and asparagine 2893 are each glycosylated (N-linked (GlcNAc...) asparagine). A disulfide bond links cysteine 2909 and cysteine 2934. The segment covering 3043–3060 (GNQVEAQSPNPASTSADT) has biased composition (polar residues). Positions 3043–3063 (GNQVEAQSPNPASTSADTNDP) are disordered.

As to quaternary structure, laminin is a complex glycoprotein, consisting of three different polypeptide chains (alpha, beta, gamma), which are bound to each other by disulfide bonds into a cross-shaped molecule comprising one long and three short arms with globules at each end. Alpha-2 is a subunit of laminin-2 (laminin-211 or merosin), laminin-4 (laminin-221 or S-merosin) and laminin-12 (laminin-213). Interacts with FBLN1, FBLN2 and NID2. Placenta, striated muscle, peripheral nerve, cardiac muscle, pancreas, lung, spleen, kidney, adrenal gland, skin, testis, meninges, choroid plexus, and some other regions of the brain; not in liver, thymus and bone.

The protein resides in the secreted. The protein localises to the extracellular space. It is found in the extracellular matrix. Its subcellular location is the basement membrane. Functionally, binding to cells via a high affinity receptor, laminin is thought to mediate the attachment, migration and organization of cells into tissues during embryonic development by interacting with other extracellular matrix components. The protein is Laminin subunit alpha-2 (LAMA2) of Homo sapiens (Human).